Consider the following 197-residue polypeptide: ATP synthase subunit delta (197 aa).

Over residues 1–16 (MSSAVSASPQAASPQQ) the composition is skewed to low complexity. The interval 1-20 (MSSAVSASPQAASPQQDRTS) is disordered.

This sequence belongs to the ATPase delta chain family. In terms of assembly, F-type ATPases have 2 components, F(1) - the catalytic core - and F(0) - the membrane proton channel. F(1) has five subunits: alpha(3), beta(3), gamma(1), delta(1), epsilon(1). F(0) has three main subunits: a(1), b(2) and c(10-14). The alpha and beta chains form an alternating ring which encloses part of the gamma chain. F(1) is attached to F(0) by a central stalk formed by the gamma and epsilon chains, while a peripheral stalk is formed by the delta and b chains.

The protein resides in the cell inner membrane. In terms of biological role, f(1)F(0) ATP synthase produces ATP from ADP in the presence of a proton or sodium gradient. F-type ATPases consist of two structural domains, F(1) containing the extramembraneous catalytic core and F(0) containing the membrane proton channel, linked together by a central stalk and a peripheral stalk. During catalysis, ATP synthesis in the catalytic domain of F(1) is coupled via a rotary mechanism of the central stalk subunits to proton translocation. Its function is as follows. This protein is part of the stalk that links CF(0) to CF(1). It either transmits conformational changes from CF(0) to CF(1) or is implicated in proton conduction. The protein is ATP synthase subunit delta of Acidiphilium cryptum (strain JF-5).